Here is a 156-residue protein sequence, read N- to C-terminus: Small ribosomal subunit protein uS7 (156 aa).

It belongs to the universal ribosomal protein uS7 family. As to quaternary structure, part of the 30S ribosomal subunit. Contacts proteins S9 and S11.

In terms of biological role, one of the primary rRNA binding proteins, it binds directly to 16S rRNA where it nucleates assembly of the head domain of the 30S subunit. Is located at the subunit interface close to the decoding center, probably blocks exit of the E-site tRNA. The chain is Small ribosomal subunit protein uS7 from Listeria innocua serovar 6a (strain ATCC BAA-680 / CLIP 11262).